The following is a 123-amino-acid chain: Fluoride-specific ion channel FluC 2 (123 aa).

2 helical membrane-spanning segments follow: residues M1–D21 and V30–I50. Na(+) contacts are provided by G74 and T77. Residues A99 to L119 traverse the membrane as a helical segment.

It belongs to the fluoride channel Fluc/FEX (TC 1.A.43) family.

The protein localises to the cell membrane. The catalysed reaction is fluoride(in) = fluoride(out). Its activity is regulated as follows. Na(+) is not transported, but it plays an essential structural role and its presence is essential for fluoride channel function. Its function is as follows. Fluoride-specific ion channel. Important for reducing fluoride concentration in the cell, thus reducing its toxicity. The chain is Fluoride-specific ion channel FluC 2 from Cutibacterium acnes (strain DSM 16379 / KPA171202) (Propionibacterium acnes).